A 176-amino-acid polypeptide reads, in one-letter code: Large ribosomal subunit protein uL22 (176 aa).

Residues 113 to 176 (VVESRPSKDQ…EISEAKGGSD (64 aa)) are disordered. Over residues 136-152 (SKAAATAPAKKSSASKA) the composition is skewed to low complexity. Basic and acidic residues predominate over residues 159–176 (TKAESKTSEISEAKGGSD).

The protein belongs to the universal ribosomal protein uL22 family. As to quaternary structure, part of the 50S ribosomal subunit.

This protein binds specifically to 23S rRNA; its binding is stimulated by other ribosomal proteins, e.g. L4, L17, and L20. It is important during the early stages of 50S assembly. It makes multiple contacts with different domains of the 23S rRNA in the assembled 50S subunit and ribosome. Its function is as follows. The globular domain of the protein is located near the polypeptide exit tunnel on the outside of the subunit, while an extended beta-hairpin is found that lines the wall of the exit tunnel in the center of the 70S ribosome. The protein is Large ribosomal subunit protein uL22 of Mycobacterium ulcerans (strain Agy99).